Here is a 378-residue protein sequence, read N- to C-terminus: Putative UDP-N-acetylglucosamine 2-epimerase (378 aa).

It belongs to the UDP-N-acetylglucosamine 2-epimerase family.

It is found in the cytoplasm. The catalysed reaction is UDP-N-acetyl-alpha-D-glucosamine = UDP-N-acetyl-alpha-D-mannosamine. The sequence is that of Putative UDP-N-acetylglucosamine 2-epimerase from Thermotoga maritima (strain ATCC 43589 / DSM 3109 / JCM 10099 / NBRC 100826 / MSB8).